A 229-amino-acid polypeptide reads, in one-letter code: Clathrin light chain B (229 aa).

2 stretches are compositionally biased toward low complexity: residues 1–17 and 45–58; these read MAED…GAPE and GAPA…AQPG. Residues 1-70 form a disordered region; sequence MAEDFGFFSS…SGAGSEDMST (70 aa). Phosphoserine is present on residues Ser11 and Ser13. An involved in binding clathrin heavy chain region spans residues 93–155; that stretch reads ADRLTQEPES…QVEKNKINNR (63 aa). Phosphothreonine is present on Thr187. A disulfide bond links Cys199 and Cys209. Lys204 is subject to N6-acetyllysine. Ser217 carries the post-translational modification Phosphoserine.

This sequence belongs to the clathrin light chain family. As to quaternary structure, clathrin coats are formed from molecules containing 3 heavy chains and 3 light chains. Interacts (via N-terminus) with HIP1. Interacts with HIP1R.

It is found in the cytoplasmic vesicle membrane. The protein localises to the membrane. It localises to the coated pit. Functionally, clathrin is the major protein of the polyhedral coat of coated pits and vesicles. The polypeptide is Clathrin light chain B (Cltb) (Mus musculus (Mouse)).